We begin with the raw amino-acid sequence, 123 residues long: uncharacterized protein (123 aa).

The disordered stretch occupies residues 100–123; the sequence is NKQPKTTHHFSTNSSEYKSRKSKH.

This is an uncharacterized protein from Acanthamoeba polyphaga mimivirus (APMV).